A 252-amino-acid chain; its full sequence is Glucosamine-6-phosphate deaminase (252 aa).

Asp67 acts as the Proton acceptor; for enolization step in catalysis. Asn137 (for ring-opening step) is an active-site residue. The active-site Proton acceptor; for ring-opening step is His139. The For ring-opening step role is filled by Glu144.

The protein belongs to the glucosamine/galactosamine-6-phosphate isomerase family. NagB subfamily.

The catalysed reaction is alpha-D-glucosamine 6-phosphate + H2O = beta-D-fructose 6-phosphate + NH4(+). The protein operates within amino-sugar metabolism; N-acetylneuraminate degradation; D-fructose 6-phosphate from N-acetylneuraminate: step 5/5. Its function is as follows. Catalyzes the reversible isomerization-deamination of glucosamine 6-phosphate (GlcN6P) to form fructose 6-phosphate (Fru6P) and ammonium ion. The polypeptide is Glucosamine-6-phosphate deaminase (Staphylococcus aureus (strain MRSA252)).